Consider the following 434-residue polypeptide: Arginine/serine-rich coiled-coil protein 2 (434 aa).

Over residues 1 to 27 the composition is skewed to basic and acidic residues; it reads MAASDTERDGLAPEKTSPDRDKKKEQS. Residues 1 to 230 are disordered; the sequence is MAASDTERDG…PSPPPFRGRN (230 aa). An N-acetylalanine modification is found at A2. Phosphoserine is present on S4. A phosphothreonine mark is found at T6 and T16. S17, S30, and S32 each carry phosphoserine. Positions 35–51 are enriched in basic residues; it reads ASKHHYSRSRSRSRERK. The segment covering 66 to 111 has biased composition (basic and acidic residues); that stretch reads RSKEGRRHESKDKSSKKHKSEEHNDKEHSSDKGRERLNSSENGEDR. Phosphoserine is present on S104. Positions 112 to 214 are enriched in basic residues; the sequence is HKRKERKSSR…KRIEKPRRFS (103 aa). Residues 230-270 are a coiled coil; sequence NTAMDAQEALARRLERAKKLQEQREKEMVEKQKQQEIAAAA. K375 participates in a covalent cross-link: Glycyl lysine isopeptide (Lys-Gly) (interchain with G-Cter in SUMO1); alternate. Residue K375 forms a Glycyl lysine isopeptide (Lys-Gly) (interchain with G-Cter in SUMO2); alternate linkage. S376 is modified (phosphoserine).

It belongs to the RSRC2 family.

This is Arginine/serine-rich coiled-coil protein 2 (RSRC2) from Homo sapiens (Human).